A 213-amino-acid chain; its full sequence is MEEGVNMDIRPTRIELIRTRRRIRLAKKGLDLLKMKRSALIYEFLQISRTIRGMKENLRKEVVEALNIIKVASVLEGSLALERIANMSSDSRINVNSRNVMGVNIPTLEVSYNLSILSDVYRTVSVPVAIDDSIRRFQKLFYDLILIVEKENSLRNLLMEIDRTKRRSNAIENILIPRLEYQAKMIKMTLDERERDTFTTLKTIKKKIEAEND.

This sequence belongs to the V-ATPase D subunit family. Has multiple subunits with at least A(3), B(3), C, D, E, F, H, I and proteolipid K(x).

The protein localises to the cell membrane. Its function is as follows. Component of the A-type ATP synthase that produces ATP from ADP in the presence of a proton gradient across the membrane. In Thermoplasma acidophilum (strain ATCC 25905 / DSM 1728 / JCM 9062 / NBRC 15155 / AMRC-C165), this protein is A-type ATP synthase subunit D.